The primary structure comprises 203 residues: Superoxide dismutase [Mn/Fe] (203 aa).

Fe(3+)-binding residues include His-27, His-81, Asp-163, and His-167. The Mn(2+) site is built by His-27, His-81, Asp-163, and His-167.

Belongs to the iron/manganese superoxide dismutase family. The cofactor is Mn(2+). Fe(3+) serves as cofactor.

The catalysed reaction is 2 superoxide + 2 H(+) = H2O2 + O2. In terms of biological role, destroys superoxide anion radicals which are normally produced within the cells and which are toxic to biological systems. Catalyzes the dismutation of superoxide anion radicals into O2 and H2O2 by successive reduction and oxidation of the transition metal ion at the active site. This is Superoxide dismutase [Mn/Fe] (sodA) from Streptococcus mutans serotype c (strain ATCC 700610 / UA159).